The primary structure comprises 256 residues: Acetyl-coenzyme A carboxylase carboxyl transferase subunit alpha (256 aa).

In terms of domain architecture, CoA carboxyltransferase C-terminal spans 1 to 236 (MTDVARILKE…RSHLIDEITQ (236 aa)).

The protein belongs to the AccA family. As to quaternary structure, acetyl-CoA carboxylase is a heterohexamer composed of biotin carboxyl carrier protein (AccB), biotin carboxylase (AccC) and two subunits each of ACCase subunit alpha (AccA) and ACCase subunit beta (AccD).

The protein resides in the cytoplasm. The enzyme catalyses N(6)-carboxybiotinyl-L-lysyl-[protein] + acetyl-CoA = N(6)-biotinyl-L-lysyl-[protein] + malonyl-CoA. Its pathway is lipid metabolism; malonyl-CoA biosynthesis; malonyl-CoA from acetyl-CoA: step 1/1. Its function is as follows. Component of the acetyl coenzyme A carboxylase (ACC) complex. First, biotin carboxylase catalyzes the carboxylation of biotin on its carrier protein (BCCP) and then the CO(2) group is transferred by the carboxyltransferase to acetyl-CoA to form malonyl-CoA. The chain is Acetyl-coenzyme A carboxylase carboxyl transferase subunit alpha from Streptococcus equi subsp. zooepidemicus (strain MGCS10565).